A 145-amino-acid chain; its full sequence is D-aminoacyl-tRNA deacylase (145 aa).

The Gly-cisPro motif, important for rejection of L-amino acids signature appears at 137–138; it reads GP.

The protein belongs to the DTD family. In terms of assembly, homodimer.

It is found in the cytoplasm. It catalyses the reaction glycyl-tRNA(Ala) + H2O = tRNA(Ala) + glycine + H(+). It carries out the reaction a D-aminoacyl-tRNA + H2O = a tRNA + a D-alpha-amino acid + H(+). Functionally, an aminoacyl-tRNA editing enzyme that deacylates mischarged D-aminoacyl-tRNAs. Also deacylates mischarged glycyl-tRNA(Ala), protecting cells against glycine mischarging by AlaRS. Acts via tRNA-based rather than protein-based catalysis; rejects L-amino acids rather than detecting D-amino acids in the active site. By recycling D-aminoacyl-tRNA to D-amino acids and free tRNA molecules, this enzyme counteracts the toxicity associated with the formation of D-aminoacyl-tRNA entities in vivo and helps enforce protein L-homochirality. This is D-aminoacyl-tRNA deacylase from Saccharophagus degradans (strain 2-40 / ATCC 43961 / DSM 17024).